Here is a 497-residue protein sequence, read N- to C-terminus: Aldehyde dehydrogenase (497 aa).

G241–G246 provides a ligand contact to NAD(+). The active-site Proton acceptor is E264. C298 (nucleophile) is an active-site residue.

This sequence belongs to the aldehyde dehydrogenase family.

The protein localises to the cytoplasm. It carries out the reaction an aldehyde + NAD(+) + H2O = a carboxylate + NADH + 2 H(+). It functions in the pathway alcohol metabolism; ethanol degradation; acetate from ethanol: step 2/2. The protein is Aldehyde dehydrogenase (ALTA10) of Alternaria alternata (Alternaria rot fungus).